An 807-amino-acid polypeptide reads, in one-letter code: Serine/threonine-protein kinase AfsK (807 aa).

The region spanning 16–272 (FEVLGRLGAG…QAQLAPHLFA (257 aa)) is the Protein kinase domain. Residues 22–30 (LGAGGMGLV) and lysine 44 contribute to the ATP site. Serine 71 is modified (phosphoserine; by autocatalysis). Aspartate 138 functions as the Proton acceptor in the catalytic mechanism. Threonine 168 is subject to Phosphothreonine; by autocatalysis. Disordered stretches follow at residues 292-328 (MIERRRGGRRTARRPPRPRPRRLRAAPQGPGAGHRLA) and 353-429 (AGPS…PSPA). Positions 297 to 315 (RGGRRTARRPPRPRPRRLR) are enriched in basic residues. Over residues 353–363 (AGPSAAPDGGP) the composition is skewed to low complexity.

It belongs to the protein kinase superfamily. Ser/Thr protein kinase family. As to quaternary structure, interacts (via the N-terminal kinase domain) with KbpA; the interaction prevents autophosphorylation of AfsK. Autophosphorylated mainly on threonine residues. Some phosphorylation on serine residues. Autophosphorylation on Thr-168 is the major site enhancing kinase activity towards AfsR, and is regulated though interaction with KbpA.

It carries out the reaction L-seryl-[protein] + ATP = O-phospho-L-seryl-[protein] + ADP + H(+). The enzyme catalyses L-threonyl-[protein] + ATP = O-phospho-L-threonyl-[protein] + ADP + H(+). Its function is as follows. Component of the AfsK/AfsR system involved in the response of aerial mycelium formation to glucose. In Streptomyces griseus, this protein is Serine/threonine-protein kinase AfsK (afsK).